Reading from the N-terminus, the 299-residue chain is tRNA dimethylallyltransferase (299 aa).

Residue 11-18 (GPTAVGKT) participates in ATP binding. 13 to 18 (TAVGKT) provides a ligand contact to substrate. The segment at 36 to 39 (DSQQ) is interaction with substrate tRNA.

Belongs to the IPP transferase family. In terms of assembly, monomer. It depends on Mg(2+) as a cofactor.

It catalyses the reaction adenosine(37) in tRNA + dimethylallyl diphosphate = N(6)-dimethylallyladenosine(37) in tRNA + diphosphate. In terms of biological role, catalyzes the transfer of a dimethylallyl group onto the adenine at position 37 in tRNAs that read codons beginning with uridine, leading to the formation of N6-(dimethylallyl)adenosine (i(6)A). The sequence is that of tRNA dimethylallyltransferase from Streptococcus pyogenes serotype M49 (strain NZ131).